The sequence spans 179 residues: Cytoglobin-2 (179 aa).

A compositionally biased stretch (acidic residues) spans 1–11; it reads MEKEREDEETE. The disordered stretch occupies residues 1-20; that stretch reads MEKEREDEETEGRERPEPLT. Positions 18-167 constitute a Globin domain; the sequence is PLTDVERGII…LYWHITGAYT (150 aa). Residues histidine 81 and histidine 113 each coordinate heme b.

The protein belongs to the globin family. As to quaternary structure, monomeric. As to expression, expressed in all tissues examined, with highest levels in brain and eye, and considerably lower levels in skin, gut, heart, gill, liver and muscle.

The protein localises to the cytoplasm. Its subcellular location is the nucleus. The enzyme catalyses Fe(II)-heme b-[protein] + nitric oxide + O2 = Fe(III)-heme b-[protein] + nitrate. It carries out the reaction Fe(III)-heme b-[protein] + nitric oxide + H2O = Fe(II)-heme b-[protein] + nitrite + 2 H(+). The catalysed reaction is 2 superoxide + 2 H(+) = H2O2 + O2. It catalyses the reaction H2O2 + AH2 = A + 2 H2O. In terms of biological role, probable multifunctional globin with a hexacoordinated heme iron required for the catalysis of various reactions depending on redox condition of the cell as well as oxygen availability. Has a nitric oxide dioxygenase (NOD) activity and is most probably involved in cell-mediated and oxygen-dependent nitric oxide consumption. Under normoxic conditions functions as a nitric oxide dioxygenase (NOD) but under hypoxic conditions the globin may switch its function to that of a nitrite (NO2) reductase (NiR), generating nitric oxide. Could also have peroxidase and superoxide dismutase activities, detoxifying reactive oxygen species and protecting cells against oxidative stress. Also binds dioxygen with low affinity and could function as an oxygen sensor but has probably no function as a respiratory oxygen carrier. This Danio rerio (Zebrafish) protein is Cytoglobin-2.